Reading from the N-terminus, the 379-residue chain is 8-amino-7-oxononanoate synthase (379 aa).

Residues Arg-27 and Arg-34 each coordinate substrate. 114–115 provides a ligand contact to pyridoxal 5'-phosphate; sequence GY. His-139 contributes to the substrate binding site. Residues Ser-187, 212–215, and 232–235 each bind pyridoxal 5'-phosphate; these read DDAH and TLSK. Lys-235 carries the N6-(pyridoxal phosphate)lysine modification. Thr-344 provides a ligand contact to substrate.

This sequence belongs to the class-II pyridoxal-phosphate-dependent aminotransferase family. BioF subfamily. In terms of assembly, homodimer. Requires pyridoxal 5'-phosphate as cofactor.

It carries out the reaction 6-carboxyhexanoyl-[ACP] + L-alanine + H(+) = (8S)-8-amino-7-oxononanoate + holo-[ACP] + CO2. Its pathway is cofactor biosynthesis; biotin biosynthesis. Catalyzes the decarboxylative condensation of pimeloyl-[acyl-carrier protein] and L-alanine to produce 8-amino-7-oxononanoate (AON), [acyl-carrier protein], and carbon dioxide. The polypeptide is 8-amino-7-oxononanoate synthase (Methylobacterium sp. (strain 4-46)).